Reading from the N-terminus, the 571-residue chain is Gag-Pro polyprotein (571 aa).

G2 carries N-myristoyl glycine; by host lipidation. The PPXY motif motif lies at 100–103; the sequence is PPPY. Repeats lie at residues 342-362 and 367-387; these read PPPGPCYRCLKEGHWARDCPT and PPPGPCPICKDPSHWKRDCPT. 2 CCHC-type zinc fingers span residues 345–362 and 370–387; these read GPCYRCLKEGHWARDCPT and GPCPICKDPSHWKRDCPT. The 79-residue stretch at 447–525 folds into the Peptidase A2 domain; that stretch reads ALMLVDTGAE…DKWQILGRDV (79 aa). D452 serves as the catalytic Protease; shared with dimeric partner.

Homodimer; the homodimers are part of the immature particles. Interacts with human TSG101 and NEDD4; these interactions are essential for budding and release of viral particles. As to quaternary structure, homodimer; further assembles as homohexamers. Specific enzymatic cleavages by the viral protease yield mature proteins. The polyprotein is cleaved during and after budding, this process is termed maturation. The protease is autoproteolytically processed at its N- and C-termini. Post-translationally, gag polyprotein: Myristoylated. Myristoylation of the matrix (MA) domain mediates the transport and binding of Gag polyproteins to the host plasma membrane and is required for the assembly of viral particles.

The protein resides in the virion. The matrix domain targets Gag, Gag-Pro and Gag-Pro-Pol polyproteins to the plasma membrane via a multipartite membrane binding signal, that includes its myristoylated N-terminus. Functionally, matrix protein. Its function is as follows. Forms the spherical core of the virus that encapsulates the genomic RNA-nucleocapsid complex. In terms of biological role, binds strongly to viral nucleic acids and promote their aggregation. Also destabilizes the nucleic acids duplexes via highly structured zinc-binding motifs. The aspartyl protease mediates proteolytic cleavages of Gag and Gag-Pol polyproteins during or shortly after the release of the virion from the plasma membrane. Cleavages take place as an ordered, step-wise cascade to yield mature proteins. This process is called maturation. Displays maximal activity during the budding process just prior to particle release from the cell. The polypeptide is Gag-Pro polyprotein (Bos taurus (Bovine)).